A 231-amino-acid polypeptide reads, in one-letter code: Large ribosomal subunit protein uL1 (231 aa).

Belongs to the universal ribosomal protein uL1 family. In terms of assembly, part of the 50S ribosomal subunit.

Functionally, binds directly to 23S rRNA. The L1 stalk is quite mobile in the ribosome, and is involved in E site tRNA release. Protein L1 is also a translational repressor protein, it controls the translation of the L11 operon by binding to its mRNA. This is Large ribosomal subunit protein uL1 from Neisseria gonorrhoeae (strain ATCC 700825 / FA 1090).